We begin with the raw amino-acid sequence, 683 residues long: DNA ligase (683 aa).

NAD(+)-binding positions include 35-39, 81-82, and Glu-112; these read DAEYD and SL. Lys-114 (N6-AMP-lysine intermediate) is an active-site residue. 4 residues coordinate NAD(+): Arg-135, Glu-170, Lys-277, and Lys-301. Residues Cys-395, Cys-398, Cys-411, and Cys-417 each coordinate Zn(2+). Residues 601–683 form the BRCT domain; that stretch reads SSNSVLNNKV…YRMINSEVSE (83 aa).

Belongs to the NAD-dependent DNA ligase family. LigA subfamily. Requires Mg(2+) as cofactor. The cofactor is Mn(2+).

It catalyses the reaction NAD(+) + (deoxyribonucleotide)n-3'-hydroxyl + 5'-phospho-(deoxyribonucleotide)m = (deoxyribonucleotide)n+m + AMP + beta-nicotinamide D-nucleotide.. In terms of biological role, DNA ligase that catalyzes the formation of phosphodiester linkages between 5'-phosphoryl and 3'-hydroxyl groups in double-stranded DNA using NAD as a coenzyme and as the energy source for the reaction. It is essential for DNA replication and repair of damaged DNA. The protein is DNA ligase of Wolbachia sp. subsp. Brugia malayi (strain TRS).